The following is a 171-amino-acid chain: Galectin-related protein A (171 aa).

The Galectin domain maps to 38 to 170; sequence PFCGHIKGGL…INGDLQLTKL (133 aa).

Its function is as follows. Does not bind lactose, and may not bind carbohydrates. This chain is Galectin-related protein A (lgalsl-a), found in Xenopus laevis (African clawed frog).